We begin with the raw amino-acid sequence, 601 residues long: Protein FREE1 (601 aa).

The interval 1-240 is disordered; it reads MQQGDYNSYY…SGEYPAFEDS (240 aa). The segment covering 21–35 has biased composition (pro residues); that stretch reads TPNPNPNPNPSPPAP. Composition is skewed to polar residues over residues 63–79 and 125–155; these read DYSNYSQNYTPYGQNSE and LSSYGSFDSTAPYQQPTSQHMYYSPYDQHQT. Positions 161-175 are enriched in pro residues; it reads APPPSSAPAPNPNPA. The span at 176–197 shows a compositional bias: low complexity; sequence PYSSSLYSAPPYSSGGSSIPPS. The segment covering 214 to 231 has biased composition (basic and acidic residues); it reads NRSRSDLGSDLYGKRSDS. At Ser-218 the chain carries Phosphoserine. Residues 338 to 344 form a nuclear export signal region; the sequence is LDGLRML. The segment at 455 to 515 adopts an FYVE-type zinc-finger fold; that stretch reads DEAVSKCTSC…VCDRCMAEVS (61 aa). Zn(2+) is bound by residues Cys-461, Cys-464, Cys-477, Cys-480, Cys-485, Cys-488, Cys-507, and Cys-510. The stretch at 527–552 forms a coiled coil; the sequence is RNVSLQSHEDLARKLQEEMERNRKSS. 2 positions are modified to phosphoserine: Ser-530 and Ser-533. The tract at residues 542-561 is disordered; it reads QEEMERNRKSSSGLREGSGR.

Part of the ESCRT-I complex. Interacts with VPS23A and VPS23B, but not with VPS28 or VPS37. Interacts with IRT1. Interacts with SH3P2. Interacts with SH3P3, but not with SH3P1. Interacts (via N-terminus) with PYL4 and PYR3. Interacts (via C-terminus) with SNRK2D/SNRK2.2, SNRK2I/SNRK2.3, ABF4 and ABI5. Interacts with SINAT1, SINAT2, SINAT3 and SINAT4. Interacts with SINAT5. Component of a phosphoinositide 3-kinase (PI3K) complex containing ATG6, SH3P2 and FREE1. Phosphorylated at Ser-530 and Ser-533 by SNRK2D/SNRK2.2 and SNRK2I/SNRK2.3 in response to abscisic acid (ABA). Phosphorylation is necessary for ABA-induced FREE1 nuclear import. Post-translationally, ubiquitinated by SINAT1, SINAT2, SINAT3 and SINAT4 for subsequent proteasomal degradation. As to expression, ubiquitous. Lowest expression in mature seeds.

The protein resides in the cytoplasm. It localises to the prevacuolar compartment membrane. The protein localises to the late endosome. It is found in the endosome. Its subcellular location is the multivesicular body. The protein resides in the nucleus. Endosomal sorting complex required for transport (ESCRT) component regulating multivesicular body (MVB) protein sorting and plant growth. Required for the formation of intra-luminal vesicles (ILVs)in MVBs. Binds to phosphatidylinositol-3-phosphate (PI3P) and ubiquitin. Controls IRT1 recycling to the plasma membrane and impacts the polar delivery of this transporter to the outer plasma membrane domain. Regulates ubiquitin-dependent membrane protein degradation, vacuolar transport, autophagy, and vacuole biogenesis. ESCRT component that binds ubiquitin and regulates vacuolar sorting of proteins. Attenuates abscisic acid (ABA) signaling through RSL1-triggered degradation of the ABA receptors PYR1 and PYL4. Interacts with PYL4 and PYR1, and delivers the ubiquitinated ABA receptors as cargo to the vacuolar degradation pathway. In response to ABA, is phosphorylated by SnRK2 kinases which mediate FREE1 nuclear import. In the nucleus, interacts with the ABA-responsive transcription factors ABF4 and ABI5 to reduce their ability to bind to their cis-regulatory sequences of downstream genes, thus leading to transcriptional inhibition of ABA signaling pathway. Negatively regulates salt stress tolerance via a negative feedback loop involving ABA signaling pathway. The sequence is that of Protein FREE1 from Arabidopsis thaliana (Mouse-ear cress).